A 406-amino-acid chain; its full sequence is MTYSVDKVRADFPVLSREVNGLPLAYLDSAASAQKPSQVIDAEAEFYRHGYAAVHRGIHTLSAQATEKMESVRKRASLFINARSAEELVFVRGTTEGINLVANSWGNSNVRAGDNIIISQMEHHANIVPWQMLCARVGAELRVIPLNPDGTLQLEMLPNLFDEKTRLLAITHVSNVLGTENPLAEMITLAHQHGAKVLVDGAQAVMHHPVDVQALDCDFYVFSGHKLYGPTGIGILYVKEALLQEMPPWEGGGSMIATVSLSEGTTWTKAPWRFEAGTPNTGGIIGLGAALEYVSALGLNNIAEYEQNLMHYALSQLESVPDLTLYGPQNRLGVIAFNLGKHHAYDVGSFLDNYGIAVRTGHHCAMPLMAYYNVPAMCRASLAMYNTHEEVDRLVTGLQRIHRLLG.

Lysine 226 carries the N6-(pyridoxal phosphate)lysine modification. Cysteine 364 acts as the Cysteine persulfide intermediate in catalysis.

The protein belongs to the class-V pyridoxal-phosphate-dependent aminotransferase family. Csd subfamily. Homodimer. Interacts with SufE and the SufBCD complex composed of SufB, SufC and SufD. The interaction with SufE is required to mediate the direct transfer of the sulfur atom from the S-sulfanylcysteine. Pyridoxal 5'-phosphate serves as cofactor.

The protein localises to the cytoplasm. The enzyme catalyses (sulfur carrier)-H + L-cysteine = (sulfur carrier)-SH + L-alanine. It carries out the reaction L-selenocysteine + AH2 = hydrogenselenide + L-alanine + A + H(+). It participates in cofactor biosynthesis; iron-sulfur cluster biosynthesis. Functionally, cysteine desulfurases mobilize the sulfur from L-cysteine to yield L-alanine, an essential step in sulfur metabolism for biosynthesis of a variety of sulfur-containing biomolecules. Component of the suf operon, which is activated and required under specific conditions such as oxidative stress and iron limitation. Acts as a potent selenocysteine lyase in vitro, that mobilizes selenium from L-selenocysteine. Selenocysteine lyase activity is however unsure in vivo. The chain is Cysteine desulfurase from Escherichia coli O7:K1 (strain IAI39 / ExPEC).